The following is a 250-amino-acid chain: Small ribosomal subunit protein uS3 (250 aa).

A KH type-2 domain is found at 39–111; the sequence is IRTLIKNNYP…KVQINIFEVK (73 aa).

This sequence belongs to the universal ribosomal protein uS3 family. Part of the 30S ribosomal subunit. Forms a tight complex with proteins S10 and S14.

Binds the lower part of the 30S subunit head. Binds mRNA in the 70S ribosome, positioning it for translation. The polypeptide is Small ribosomal subunit protein uS3 (Alder yellows phytoplasma).